Reading from the N-terminus, the 443-residue chain is Tol-Pal system protein TolB (443 aa).

An N-terminal signal peptide occupies residues 1 to 18 (MRNIVYFILTLFSLTSYA).

It belongs to the TolB family. In terms of assembly, the Tol-Pal system is composed of five core proteins: the inner membrane proteins TolA, TolQ and TolR, the periplasmic protein TolB and the outer membrane protein Pal. They form a network linking the inner and outer membranes and the peptidoglycan layer.

It localises to the periplasm. Part of the Tol-Pal system, which plays a role in outer membrane invagination during cell division and is important for maintaining outer membrane integrity. This Rickettsia prowazekii (strain Madrid E) protein is Tol-Pal system protein TolB.